The primary structure comprises 294 residues: 2-oxoglutaramate amidase (294 aa).

In terms of domain architecture, CN hydrolase spans 16 to 261 (LDVAAVQVKF…EAVLRATLNF (246 aa)). Glutamate 55 functions as the Proton acceptor in the catalytic mechanism. Lysine 129 functions as the Proton donor in the catalytic mechanism. Catalysis depends on cysteine 168, which acts as the Nucleophile.

Belongs to the carbon-nitrogen hydrolase superfamily. NIT1/NIT2 family.

The enzyme catalyses 2-oxoglutaramate + H2O = 2-oxoglutarate + NH4(+). Its pathway is alkaloid degradation; nicotine degradation. Functionally, catalyzes the conversion of 2-oxoglutaramate to 2-oxoglutarate. Together with glutamate dehydrogenase, may form a physiologically relevant enzyme couple, leading to transformation of metabolically inert 2-oxoglutaramate derived from trihydroxypyridine into glutamate, a central compound of nitrogen metabolism. This chain is 2-oxoglutaramate amidase, found in Paenarthrobacter nicotinovorans (Arthrobacter nicotinovorans).